A 446-amino-acid chain; its full sequence is Phosphoglucosamine mutase (446 aa).

Serine 102 serves as the catalytic Phosphoserine intermediate. Mg(2+)-binding residues include serine 102, aspartate 241, aspartate 243, and aspartate 245. Phosphoserine is present on serine 102.

This sequence belongs to the phosphohexose mutase family. It depends on Mg(2+) as a cofactor. Activated by phosphorylation.

It carries out the reaction alpha-D-glucosamine 1-phosphate = D-glucosamine 6-phosphate. Its function is as follows. Catalyzes the conversion of glucosamine-6-phosphate to glucosamine-1-phosphate. This chain is Phosphoglucosamine mutase, found in Idiomarina loihiensis (strain ATCC BAA-735 / DSM 15497 / L2-TR).